A 106-amino-acid chain; its full sequence is Insulin-like peptide 03 (106 aa).

Residues 1–18 (MLFYFGLAVIFLIDSSQT) form the signal peptide. A propeptide spanning residues 19–34 (QTLYKVNEVGGSQVDR) is cleaved from the precursor. Cystine bridges form between C37–C93, C49–C106, and C92–C97. A propeptide spans 52 to 82 (KKRQNIPRKYGRDPNNILEKEEFAKRFLRVR) (c peptide).

Belongs to the insulin family.

Its subcellular location is the secreted. Insulin decreases blood glucose concentration. May have evolved to activate insulin receptors (INSR) in vertebrates. Molecular docking studies reveals unique interaction with the human insulin receptor. In vivo, insulin-like peptide injection reduces blood glucose levels in two models of zebrafish diabetes (streptozotocin- and glucose-induced). Also shorter swimming distance of zebrafish larvae, an effect which is not observed with human insulin. This is Insulin-like peptide 03 from Exaiptasia diaphana (Tropical sea anemone).